The sequence spans 369 residues: MVPCTLLLLLAAALAPTQTRAGPHSLRYFVTAVSRPGLGEPRYMEVGYVDDTEFVRFDSDAENPRYEPRARWMEQEGPEYWERETQKAKGNEQSFRVDLRTLLGYYNQSKGGSHTIQVISGCEVGSDGRLLRGYQQYAYDGCDYIALNEDLKTWTAADMAALITKHKWEQAGEAERLRAYLEGTCVEWLRRYLKNGNATLLRTDSPKAHVTHHSRPEDKVTLRCWALGFYPADITLTWQLNGEELIQDMELVETRPAGDGTFQKWASVVVPLGKEQYYTCHVYHQGLPEPLTLRWEPPPSTVSNMATVAVLVVLGAAIVTGAVVAFVMKMRRRNTGGKGGDYALAPGSQTSDLSLPDCKVMVHDPHSLA.

An N-terminal signal peptide occupies residues Met1–Ala21. The segment at Gly22–Gly111 is alpha-1. The Extracellular portion of the chain corresponds to Gly22–Met305. Asn107 carries an N-linked (GlcNAc...) asparagine glycan. The alpha-2 stretch occupies residues Gly112–Thr203. A disulfide bridge links Cys122 with Cys185. A glycan (N-linked (GlcNAc...) asparagine) is linked at Asn197. The alpha-3 stretch occupies residues Asp204–Trp295. Positions Pro206 to Arg294 constitute an Ig-like C1-type domain. A disulfide bond links Cys224 and Cys280. Residues Glu296 to Met305 form a connecting peptide region. Residues Ala306–Met328 traverse the membrane as a helical segment. The Cytoplasmic portion of the chain corresponds to Lys329–Ala369. A phosphoserine mark is found at Ser351 and Ser354.

It belongs to the MHC class I family. In terms of assembly, heterodimer of an alpha chain and a beta chain (beta-2-microglobulin).

The protein resides in the membrane. Its function is as follows. Involved in the presentation of foreign antigens to the immune system. This Mus musculus (Mouse) protein is H-2 class I histocompatibility antigen, K-B alpha chain (H2-K1).